A 367-amino-acid chain; its full sequence is Peptide chain release factor 2 (367 aa).

At Q247 the chain carries N5-methylglutamine.

Belongs to the prokaryotic/mitochondrial release factor family. Methylated by PrmC. Methylation increases the termination efficiency of RF2.

The protein resides in the cytoplasm. Functionally, peptide chain release factor 2 directs the termination of translation in response to the peptide chain termination codons UGA and UAA. The sequence is that of Peptide chain release factor 2 from Caulobacter sp. (strain K31).